The primary structure comprises 375 residues: UDP-N-acetylglucosamine--N-acetylmuramyl-(pentapeptide) pyrophosphoryl-undecaprenol N-acetylglucosamine transferase (375 aa).

UDP-N-acetyl-alpha-D-glucosamine is bound by residues 13–15, N124, R165, S193, and Q294; that span reads TGG.

It belongs to the glycosyltransferase 28 family. MurG subfamily.

Its subcellular location is the cell inner membrane. It carries out the reaction di-trans,octa-cis-undecaprenyl diphospho-N-acetyl-alpha-D-muramoyl-L-alanyl-D-glutamyl-meso-2,6-diaminopimeloyl-D-alanyl-D-alanine + UDP-N-acetyl-alpha-D-glucosamine = di-trans,octa-cis-undecaprenyl diphospho-[N-acetyl-alpha-D-glucosaminyl-(1-&gt;4)]-N-acetyl-alpha-D-muramoyl-L-alanyl-D-glutamyl-meso-2,6-diaminopimeloyl-D-alanyl-D-alanine + UDP + H(+). The protein operates within cell wall biogenesis; peptidoglycan biosynthesis. In terms of biological role, cell wall formation. Catalyzes the transfer of a GlcNAc subunit on undecaprenyl-pyrophosphoryl-MurNAc-pentapeptide (lipid intermediate I) to form undecaprenyl-pyrophosphoryl-MurNAc-(pentapeptide)GlcNAc (lipid intermediate II). The chain is UDP-N-acetylglucosamine--N-acetylmuramyl-(pentapeptide) pyrophosphoryl-undecaprenol N-acetylglucosamine transferase from Mesorhizobium japonicum (strain LMG 29417 / CECT 9101 / MAFF 303099) (Mesorhizobium loti (strain MAFF 303099)).